We begin with the raw amino-acid sequence, 133 residues long: MAETFRLKIIAPTGVFFDDDIERVVIRGIEGELAILAEHTPLTTNVAIGTFNIIFADKKKKNGTLLGGIATINPRETIILTDAAEWPEEIDIKRAQEAKERALKRIHDDKFDTARARAALERAIARINSKENV.

The protein belongs to the ATPase epsilon chain family. As to quaternary structure, F-type ATPases have 2 components, CF(1) - the catalytic core - and CF(0) - the membrane proton channel. CF(1) has five subunits: alpha(3), beta(3), gamma(1), delta(1), epsilon(1). CF(0) has three main subunits: a, b and c.

The protein localises to the cell membrane. Inhibited by nitrate. Produces ATP from ADP in the presence of a sodium gradient across the membrane. The chain is ATP synthase epsilon chain, sodium ion specific (atpC) from Acetobacterium woodii (strain ATCC 29683 / DSM 1030 / JCM 2381 / KCTC 1655 / WB1).